We begin with the raw amino-acid sequence, 178 residues long: GTP-dependent dephospho-CoA kinase (178 aa).

The GTP site is built by aspartate 55, valine 57, aspartate 74, lysine 76, and glutamate 127.

Belongs to the GTP-dependent DPCK family.

It catalyses the reaction 3'-dephospho-CoA + GTP = GDP + CoA + H(+). The protein operates within cofactor biosynthesis; coenzyme A biosynthesis. Its function is as follows. Catalyzes the GTP-dependent phosphorylation of the 3'-hydroxyl group of dephosphocoenzyme A to form coenzyme A (CoA). This Saccharolobus islandicus (strain Y.N.15.51 / Yellowstone #2) (Sulfolobus islandicus) protein is GTP-dependent dephospho-CoA kinase.